The following is a 1273-amino-acid chain: MVKLAEFSRTATFAWSHDKIPLLVSGTVSGTVDANFSTDSSLELWSLLAADSEKPIASLQVDSKFNDLDWSHNNKIIAGALDNGSLELYSTNEANNAINSMARFSNHSSSVKTVKFNAKQDNVLASGGNNGEIFIWDMNKCTESPSNYTPLTPGQSMSSVDEVISLAWNQSLAHVFASAGSSNFASIWDLKAKKEVIHLSYTSPNSGIKQQLSVVEWHPKNSTRVATATGSDNDPSILIWDLRNANTPLQTLNQGHQKGILSLDWCHQDEHLLLSSGRDNTVLLWNPESAEQLSQFPARGNWCFKTKFAPEAPDLFACASFDNKIEVQTLQNLTNTLDEQETETKQQESETDFWNNVSREESKEKPTVFHLQAPTWYGEPSPAAHWAFGGKLVQITPDGKGVSITNPKISGLESNTTLSEALKTKDFKPLINQRLVKVIDDVNEEDWNLLEKLSMDGTEEFLKEALAFDNDESDAQDDANNEKEDDGEEFFQQIETNFQPEGDFSLSGNIEQTISKNLVSGNIKSAVKNSLENDLLMEAMVIALDSNNERLKESVKNAYFAKYGSKSSLSRILYSISKREVDDLVENLDVSQWKFISKAIQNLYPNDIAQRNEMLIKLGDRLKENGHRQDSLTLYLAAGSLDKVASIWLSEFPDLEDKLKKDNKTIYEAHSECLTEFIERFTVFSNFINGSSTINNEQLIAKFLEFINLTTSTGNFELATEFLNSLPSDNEEVKTEKARVLIASGKSLPAQNPATATTSKAKYTNAKTNKNVPVLPTPGMPSTTSIPSMQAPFYGMTPGASANALPPKPYVPATTTSAPVHTEGKYAPPSQPSMASPFVNKTNSSTRLNSFAPPPNPYATATVPATNVSTTSIPQNTFAPIQPGMPIMGDYNAQSSSIPSQPPINAVSGQTPHLNRKANDGWNDLPLKVKEKPSRAKAVSVAPPNILSTPTPLNGIPANAASTMPPPPLSRAPSSVSMVSPPPLHKNSRVPSLVATSESPRASISNPYAPPQSSQQFPIGTISTANQTSNTAQVASSNPYAPPPQQRVATPLSGGVPPAPLPKASNPYAPTATTQPNGSSYPPTGPYTNNHTMTSPPPVFNKPPTGPPPISMKKRSNKLASIEQNPSQGATYPPTLSSSASPLQPSQPPTLASQVNTSAENVSHEIPADQQPIVDFLKEELARVTPLTPKEYSKQLKDCDKRLKILFYHLEKQDLLTQPTIDCLHDLVALMKEKKYKEAMVIHANIATNHAQEGGNWLTGVKRLIGIAEATLN.

WD repeat units lie at residues 6–46 (EFSR…ELWS), 60–99 (QVDS…NAIN), 106–146 (NHSS…ESPS), 158–198 (SSVD…EVIH), 207–250 (GIKQ…TPLQ), 255–295 (GHQK…QLSQ), and 298–338 (ARGN…NTLD). Residue Ser-349 is modified to Phosphoserine. The stretch at 385–405 (HWAFGGKLVQITPDGKGVSIT) is one WD 8; interaction with SEC13 repeat. The segment at 815–835 (TTSAPVHTEGKYAPPSQPSMA) is disordered. A phosphoserine mark is found at Ser-836, Ser-974, Ser-977, Ser-980, Ser-988, Ser-992, and Ser-999. The disordered stretch occupies residues 933–1162 (PSRAKAVSVA…SQVNTSAENV (230 aa)). Polar residues predominate over residues 994–1039 (VATSESPRASISNPYAPPQSSQQFPIGTISTANQTSNTAQVASSNP). Thr-1050 bears the Phosphothreonine mark. At Ser-1053 the chain carries Phosphoserine. Residues 1071–1094 (TATTQPNGSSYPPTGPYTNNHTMT) show a composition bias toward polar residues. The segment covering 1095 to 1110 (SPPPVFNKPPTGPPPI) has biased composition (pro residues). The span at 1118–1129 (KLASIEQNPSQG) shows a compositional bias: polar residues. Residues 1130–1154 (ATYPPTLSSSASPLQPSQPPTLASQ) show a composition bias toward low complexity.

Belongs to the WD repeat SEC31 family. The COPII coat is composed of at least 5 proteins: the SEC23/24 complex, the SEC13/31 complex, and the protein SAR1. SEC13 and SEC31 make a 2:2 tetramer that forms the edge element of the COPII outer coat. The tetramer self-assembles in multiple copies to form the complete polyhedral cage. Interacts (via WD 8) with SEC13. Interacts with EMP24, ERV25, SEC16 and SHR3.

It is found in the cytoplasmic vesicle. The protein localises to the COPII-coated vesicle membrane. The protein resides in the endoplasmic reticulum membrane. In terms of biological role, component of the coat protein complex II (COPII) which promotes the formation of transport vesicles from the endoplasmic reticulum (ER). The coat has two main functions, the physical deformation of the endoplasmic reticulum membrane into vesicles and the selection of cargo molecules. The chain is Protein transport protein SEC31 (SEC31) from Saccharomyces cerevisiae (strain ATCC 204508 / S288c) (Baker's yeast).